A 355-amino-acid chain; its full sequence is Guanine nucleotide-binding protein G(q) subunit alpha (355 aa).

A lipid anchor (S-palmitoyl cysteine) is attached at Cys-3. The region spanning 32–355 (KEIKLLLLGT…QHITEVVPGL (324 aa)) is the G-alpha domain. The segment at 35–48 (KLLLLGTGESGKST) is G1 motif. Residues 40–47 (GTGESGKS), 174–180 (LRVRVPT), 199–203 (DVGGQ), 269–272 (NKKD), and Ala-326 contribute to the GTP site. The Mg(2+) site is built by Ser-47 and Thr-180. The tract at residues 172–180 (DVLRVRVPT) is G2 motif. The G3 motif stretch occupies residues 195–204 (FKMVDVGGQR). The interval 265-272 (ILFLNKKD) is G4 motif. The G5 motif stretch occupies residues 324–329 (TCATDT).

This sequence belongs to the G-alpha family. G(q) subfamily. In terms of assembly, g proteins are composed of 3 units; alpha, beta and gamma. The alpha chain contains the guanine nucleotide binding site.

In terms of biological role, guanine nucleotide-binding proteins (G proteins) are involved as modulators or transducers in various transmembrane signaling systems. The sequence is that of Guanine nucleotide-binding protein G(q) subunit alpha from Geodia cydonium (Sponge).